We begin with the raw amino-acid sequence, 88 residues long: UPF0250 protein Swoo_3713 (88 aa).

This sequence belongs to the UPF0250 family.

This is UPF0250 protein Swoo_3713 from Shewanella woodyi (strain ATCC 51908 / MS32).